Reading from the N-terminus, the 391-residue chain is MNLHEFQAKHLFADYDIPIPQGYVARSSGEAVEAAGRLGGSVWVVKAQVHAGGRGKAGGVKVLKTKEEVEEFTDSLLGSRLVTHQTDAKGQPIHAVLVEQGLDIARELYLGALVDRASKRVTFMGSAAGGMDIEEVAASTPEKILTLAVDPAAGFQAYQGRKMAFALGLEGKQIGQLVKIMKSLYRIFEEKDLSMIEINPLIVTGDGQLLALDAKVNVDDNAVEIGRQPQIADMRDITQEDEAEVQAAEHNLNYITLDGNIGCMVNGAGLAMATMDVVNLHGGSPANFLDVGGGTTTERVTAAFKLILSSDTVEGILVNIFGGIVRCDVIAEGIIAAVKEVGVDVPVVVRLEGTNVEQGKQMLADSGMDLIPADDLTDAAKKVVAAVGKAA.

The 238-residue stretch at 9 to 246 (KHLFADYDIP…ITQEDEAEVQ (238 aa)) folds into the ATP-grasp domain. ATP-binding positions include K46, 53 to 55 (GRG), E99, L102, and E107. Mg(2+) contacts are provided by N199 and D213. Residues N266 and 323-325 (GIV) contribute to the substrate site.

The protein belongs to the succinate/malate CoA ligase beta subunit family. As to quaternary structure, heterotetramer of two alpha and two beta subunits. Mg(2+) serves as cofactor.

It catalyses the reaction succinate + ATP + CoA = succinyl-CoA + ADP + phosphate. It carries out the reaction GTP + succinate + CoA = succinyl-CoA + GDP + phosphate. It participates in carbohydrate metabolism; tricarboxylic acid cycle; succinate from succinyl-CoA (ligase route): step 1/1. Its function is as follows. Succinyl-CoA synthetase functions in the citric acid cycle (TCA), coupling the hydrolysis of succinyl-CoA to the synthesis of either ATP or GTP and thus represents the only step of substrate-level phosphorylation in the TCA. The beta subunit provides nucleotide specificity of the enzyme and binds the substrate succinate, while the binding sites for coenzyme A and phosphate are found in the alpha subunit. This Alkalilimnicola ehrlichii (strain ATCC BAA-1101 / DSM 17681 / MLHE-1) protein is Succinate--CoA ligase [ADP-forming] subunit beta.